The chain runs to 211 residues: 2,3-bisphosphoglycerate-dependent phosphoglycerate mutase (211 aa).

Substrate contacts are provided by residues 9–16, 22–23, arginine 61, 88–91, lysine 99, 115–116, and 159–160; these read RHGQSEWN, TG, ERDY, RR, and GN. Histidine 10 functions as the Tele-phosphohistidine intermediate in the catalytic mechanism. The active-site Proton donor/acceptor is glutamate 88.

The protein belongs to the phosphoglycerate mutase family. BPG-dependent PGAM subfamily. In terms of assembly, homodimer.

It carries out the reaction (2R)-2-phosphoglycerate = (2R)-3-phosphoglycerate. It functions in the pathway carbohydrate degradation; glycolysis; pyruvate from D-glyceraldehyde 3-phosphate: step 3/5. Catalyzes the interconversion of 2-phosphoglycerate and 3-phosphoglycerate. This chain is 2,3-bisphosphoglycerate-dependent phosphoglycerate mutase, found in Sinorhizobium fredii (strain NBRC 101917 / NGR234).